Reading from the N-terminus, the 265-residue chain is MVLSRLAASGLLLLALLALSVDGKPVQQWAQGGWPRPGPEIPPLKVQQWAQGGWPRPGPEIPPLTVQQWAQNWPHPQIPPLTVQQWAQLGPPPRPQIPPLEVQQWAQGRAPHPPIPPAPLQKWAPVQKWAPLLQPHESPASGTTALREELSLGPEAASGVPSAGAEVGRSGSKAPAAPHRLSKSKGAAATSAASRPMRDLRPDGKQARQNWGRMVHHDHHAAVGGGGGGGGGGARRLKGLAKKGAAKGCFGLKLDRIGTMSGLGC.

Residues 1-23 (MVLSRLAASGLLLLALLALSVDG) form the signal peptide. Residues 24-30 (KPVQQWA) constitute a propeptide that is removed on maturation. Gln-31 carries the post-translational modification Pyrrolidone carboxylic acid. A propeptide spanning residues 44-50 (LKVQQWA) is cleaved from the precursor. A Pyrrolidone carboxylic acid modification is found at Gln-51. Residues 64-70 (LTVQQWA) constitute a propeptide that is removed on maturation. The residue at position 71 (Gln-71) is a Pyrrolidone carboxylic acid. The propeptide occupies 81–87 (LTVQQWA). Gln-88 bears the Pyrrolidone carboxylic acid mark. Residues 100–106 (LEVQQWA) constitute a propeptide that is removed on maturation. Gln-107 is subject to Pyrrolidone carboxylic acid. Residues 118–120 (APL) constitute a propeptide that is removed on maturation. Residue Gln-121 is modified to Pyrrolidone carboxylic acid. Val-126 is a propeptide. Residue Gln-127 is modified to Pyrrolidone carboxylic acid. The propeptide occupies 132–241 (LLQPHESPAS…GGARRLKGLA (110 aa)). Residues 153–211 (GPEAASGVPSAGAEVGRSGSKAPAAPHRLSKSKGAAATSAASRPMRDLRPDGKQARQNW) are disordered. Residues 184-194 (SKGAAATSAAS) are compositionally biased toward low complexity. The span at 196–206 (PMRDLRPDGKQ) shows a compositional bias: basic and acidic residues. Cys-249 and Cys-265 are oxidised to a cystine.

The protein in the N-terminal section; belongs to the bradykinin-potentiating peptide family. It in the C-terminal section; belongs to the natriuretic peptide family. In terms of tissue distribution, expressed by the venom gland.

Its subcellular location is the secreted. The protein localises to the cytoplasm. The protein resides in the cytosol. Modestly inhibits ACE (with highest affinity for the N-site) and reveals strong bradykinin-potentiating activity. Induces nitric oxide (NO) production depended on muscarinic acetylcholine receptor M1 subtype (CHRM1) and bradykinin B2 receptor (BDKRB2) activation. Both these receptors contribute to the vasodilation induced by this peptide that may have an indirect action on BDKRB2 and a direct agonistic action on CHRM1. Its function is as follows. Peptide with several activities. It inhibits the activity of the angiotensin-converting enzyme (ACE) by a preferential interaction with its C-domain. It evokes transient hypotension (-14 mmHg) similar to that evoked by 0.5 ug of bradykinin, when injected alone into rats. It has a high bradykinin-potentiating effect (120%), when 60 nmol of BPP-10c are coinjected with 0.5 ug of bradykinin into rats. Does not affect angiotensin-1 pressor effects. Shows potent and long-lasting antihypertensive activity as well as a reduction of the heart rate. It also binds and dose-dependently promotes the activation of cytosolic argininosuccinate synthase (ASS1), an enzyme that catalyzes the conversion of citrulline, L-aspartate and ATP to argininosuccinate, AMP and pyrophosphate. It also enhances ASS1-dependent arginine production in HEK 293 cells, as well as in spontaneous hypertensive rat (SHR) and Wistar rat plasma. In addition, it induces the production of nitric-oxide (NO) by HUVEC cells via the endothelial nitric-oxide synthase (NOS3), which use arginine as a substrate and produce NO. It has been shown to be internalized by ASS1-expressing endothelial (HUVEC) and kidney (HEK 293) cells, and is detected homogenously distributed within the cell cytoplasm for up to 2 hours. Functionally, has a vasorelaxant activity in rat aortic strips and a diuretic potency in anesthetized rats. May act by activating natriuretic receptors (NPR1 and/or NPR2). The polypeptide is Bradykinin-potentiating and C-type natriuretic peptides (Bothrops insularis (Golden lancehead)).